Consider the following 233-residue polypeptide: UPF0128 protein MJ1463 (233 aa).

Belongs to the UPF0128 family.

The chain is UPF0128 protein MJ1463 from Methanocaldococcus jannaschii (strain ATCC 43067 / DSM 2661 / JAL-1 / JCM 10045 / NBRC 100440) (Methanococcus jannaschii).